A 377-amino-acid chain; its full sequence is Queuine tRNA-ribosyltransferase (377 aa).

Catalysis depends on D93, which acts as the Proton acceptor. Residues 93–97 (DSGGF), D147, Q190, and G216 each bind substrate. Residues 247-253 (GVGTPDD) are RNA binding. D266 serves as the catalytic Nucleophile. The tract at residues 271–275 (TRAGR) is RNA binding; important for wobble base 34 recognition. The Zn(2+) site is built by C304, C306, C309, and H335.

The protein belongs to the queuine tRNA-ribosyltransferase family. As to quaternary structure, homodimer. Within each dimer, one monomer is responsible for RNA recognition and catalysis, while the other monomer binds to the replacement base PreQ1. Zn(2+) serves as cofactor.

The enzyme catalyses 7-aminomethyl-7-carbaguanine + guanosine(34) in tRNA = 7-aminomethyl-7-carbaguanosine(34) in tRNA + guanine. It participates in tRNA modification; tRNA-queuosine biosynthesis. Functionally, catalyzes the base-exchange of a guanine (G) residue with the queuine precursor 7-aminomethyl-7-deazaguanine (PreQ1) at position 34 (anticodon wobble position) in tRNAs with GU(N) anticodons (tRNA-Asp, -Asn, -His and -Tyr). Catalysis occurs through a double-displacement mechanism. The nucleophile active site attacks the C1' of nucleotide 34 to detach the guanine base from the RNA, forming a covalent enzyme-RNA intermediate. The proton acceptor active site deprotonates the incoming PreQ1, allowing a nucleophilic attack on the C1' of the ribose to form the product. After dissociation, two additional enzymatic reactions on the tRNA convert PreQ1 to queuine (Q), resulting in the hypermodified nucleoside queuosine (7-(((4,5-cis-dihydroxy-2-cyclopenten-1-yl)amino)methyl)-7-deazaguanosine). The sequence is that of Queuine tRNA-ribosyltransferase from Granulibacter bethesdensis (strain ATCC BAA-1260 / CGDNIH1).